Reading from the N-terminus, the 436-residue chain is Trigger factor (436 aa).

The 86-residue stretch at 161 to 246 (GDQVIVDFDG…VREVKEPTLP (86 aa)) folds into the PPIase FKBP-type domain.

It belongs to the FKBP-type PPIase family. Tig subfamily.

The protein localises to the cytoplasm. The enzyme catalyses [protein]-peptidylproline (omega=180) = [protein]-peptidylproline (omega=0). Involved in protein export. Acts as a chaperone by maintaining the newly synthesized protein in an open conformation. Functions as a peptidyl-prolyl cis-trans isomerase. This chain is Trigger factor, found in Thioalkalivibrio sulfidiphilus (strain HL-EbGR7).